The sequence spans 489 residues: Probable apyrase 1 (489 aa).

At 1-28 the chain is on the cytoplasmic side; it reads MRRFSAAAGARQQQQQGEAVSDRVLRFR. The helical; Signal-anchor for type II membrane protein transmembrane segment at 29–49 threads the bilayer; sequence GVLVVVLAPVLLISLVLLLMP. Topologically, residues 50-489 are extracellular; the sequence is RAPASATVEG…GSAIEVASSS (440 aa). An ATP-binding site is contributed by 89–99; that stretch reads VIFDAGSSGSR. The Proton acceptor role is filled by Glu-211. Position 235–245 (235–245) interacts with ATP; it reads GVVDLGGGSVQ.

Belongs to the GDA1/CD39 NTPase family. The cofactor is Ca(2+).

The protein resides in the membrane. It catalyses the reaction a ribonucleoside 5'-triphosphate + 2 H2O = a ribonucleoside 5'-phosphate + 2 phosphate + 2 H(+). Functionally, catalyzes the hydrolysis of phosphoanhydride bonds of nucleoside tri- and di-phosphates. The protein is Probable apyrase 1 (APY1) of Oryza sativa subsp. japonica (Rice).